The primary structure comprises 193 residues: MIGRIAGVLLEKNPPHLLIDCNGVGYEVDVPMSTFYNLPGTGEKVVLLTQMIVREDAHLLYGFLTPQERSTFRELLKITGIGARMALAVLSGMSVQELSQTVTMQDAARLTRVPGIGKKTAERLLLELKGKLGADLGAMAGAASQSDHASDILNALLALGYSEKEGLAAIKNVPAGTGVSEGIKLALKALSKA.

The domain I stretch occupies residues 1-64; sequence MIGRIAGVLL…EDAHLLYGFL (64 aa). The domain II stretch occupies residues 65–139; that stretch reads TPQERSTFRE…GKLGADLGAM (75 aa). The segment at 139–143 is flexible linker; sequence MAGAA. Residues 144 to 193 are domain III; the sequence is SQSDHASDILNALLALGYSEKEGLAAIKNVPAGTGVSEGIKLALKALSKA.

The protein belongs to the RuvA family. As to quaternary structure, homotetramer. Forms an RuvA(8)-RuvB(12)-Holliday junction (HJ) complex. HJ DNA is sandwiched between 2 RuvA tetramers; dsDNA enters through RuvA and exits via RuvB. An RuvB hexamer assembles on each DNA strand where it exits the tetramer. Each RuvB hexamer is contacted by two RuvA subunits (via domain III) on 2 adjacent RuvB subunits; this complex drives branch migration. In the full resolvosome a probable DNA-RuvA(4)-RuvB(12)-RuvC(2) complex forms which resolves the HJ.

It localises to the cytoplasm. The RuvA-RuvB-RuvC complex processes Holliday junction (HJ) DNA during genetic recombination and DNA repair, while the RuvA-RuvB complex plays an important role in the rescue of blocked DNA replication forks via replication fork reversal (RFR). RuvA specifically binds to HJ cruciform DNA, conferring on it an open structure. The RuvB hexamer acts as an ATP-dependent pump, pulling dsDNA into and through the RuvAB complex. HJ branch migration allows RuvC to scan DNA until it finds its consensus sequence, where it cleaves and resolves the cruciform DNA. The chain is Holliday junction branch migration complex subunit RuvA from Paraburkholderia phymatum (strain DSM 17167 / CIP 108236 / LMG 21445 / STM815) (Burkholderia phymatum).